The following is a 457-amino-acid chain: UDP-N-acetylmuramate--L-alanine ligase (457 aa).

112–118 (GAHGKTS) serves as a coordination point for ATP.

Belongs to the MurCDEF family.

The protein resides in the cytoplasm. The enzyme catalyses UDP-N-acetyl-alpha-D-muramate + L-alanine + ATP = UDP-N-acetyl-alpha-D-muramoyl-L-alanine + ADP + phosphate + H(+). It participates in cell wall biogenesis; peptidoglycan biosynthesis. Cell wall formation. The polypeptide is UDP-N-acetylmuramate--L-alanine ligase (Desulfosudis oleivorans (strain DSM 6200 / JCM 39069 / Hxd3) (Desulfococcus oleovorans)).